A 630-amino-acid chain; its full sequence is Zinc finger protein 37 homolog (630 aa).

Disordered stretches follow at residues 1 to 45 (MSVS…SAAE), 77 to 172 (KPDM…PSKK), and 193 to 285 (HSRN…KHEK). The segment covering 14–30 (ETVDRRRSAETTKEAGR) has biased composition (basic and acidic residues). The 72-residue stretch at 32 to 103 (LEMAVSEPEA…KGKRPSQGCP (72 aa)) folds into the KRAB domain. Phosphoserine is present on serine 42. A compositionally biased stretch (basic and acidic residues) spans 110–122 (KQKETDGKVQKDD). A compositionally biased stretch (basic residues) spans 161 to 172 (NNLHKKHVPSKK). Over residues 193 to 206 (HSRNCVKRKSDAAK) the composition is skewed to basic and acidic residues. The segment covering 221 to 231 (KGKKQTGKKHE) has biased composition (basic residues). Composition is skewed to basic and acidic residues over residues 232–243 (KLSSHSSSDKCN) and 260–274 (IKQD…HEKS). 2 C2H2-type zinc fingers span residues 293-315 (YECN…QRVH) and 321-343 (YECN…QRTH). The C2H2-type 3; atypical zinc finger occupies 349 to 367 (YECIQCGKAHGHKHALTDH). 9 consecutive C2H2-type zinc fingers follow at residues 377 to 399 (YECA…VRSH), 405 to 427 (YECK…VRTH), 433 to 455 (YECN…MRIH), 461 to 483 (FECN…QRTH), 489 to 511 (YKCN…MRTH), 517 to 539 (FECN…QRVH), 545 to 567 (YECN…QRTH), 573 to 595 (YECN…QRSH), and 601 to 623 (YECN…VKTH).

It belongs to the krueppel C2H2-type zinc-finger protein family. In terms of tissue distribution, expressed at low level in several tissues including fetal cartilage.

It localises to the nucleus. May be involved in transcriptional regulation. The chain is Zinc finger protein 37 homolog (ZFP37) from Homo sapiens (Human).